Consider the following 357-residue polypeptide: DNA replication and repair protein RecF (357 aa).

30–37 contributes to the ATP binding site; the sequence is GANGSGKT.

Belongs to the RecF family.

It localises to the cytoplasm. The RecF protein is involved in DNA metabolism; it is required for DNA replication and normal SOS inducibility. RecF binds preferentially to single-stranded, linear DNA. It also seems to bind ATP. The polypeptide is DNA replication and repair protein RecF (Enterobacter sp. (strain 638)).